A 416-amino-acid chain; its full sequence is NADH-quinone oxidoreductase subunit D (416 aa).

It belongs to the complex I 49 kDa subunit family. NDH-1 is composed of 14 different subunits. Subunits NuoB, C, D, E, F, and G constitute the peripheral sector of the complex.

It is found in the cell inner membrane. It catalyses the reaction a quinone + NADH + 5 H(+)(in) = a quinol + NAD(+) + 4 H(+)(out). In terms of biological role, NDH-1 shuttles electrons from NADH, via FMN and iron-sulfur (Fe-S) centers, to quinones in the respiratory chain. The immediate electron acceptor for the enzyme in this species is believed to be ubiquinone. Couples the redox reaction to proton translocation (for every two electrons transferred, four hydrogen ions are translocated across the cytoplasmic membrane), and thus conserves the redox energy in a proton gradient. This chain is NADH-quinone oxidoreductase subunit D, found in Rhodopseudomonas palustris (strain BisB5).